A 231-amino-acid chain; its full sequence is 7-cyano-7-deazaguanine synthase (231 aa).

ATP is bound at residue F8–L18. C188, C197, C200, and C203 together coordinate Zn(2+).

The protein belongs to the QueC family. The cofactor is Zn(2+).

It catalyses the reaction 7-carboxy-7-deazaguanine + NH4(+) + ATP = 7-cyano-7-deazaguanine + ADP + phosphate + H2O + H(+). The protein operates within purine metabolism; 7-cyano-7-deazaguanine biosynthesis. In terms of biological role, catalyzes the ATP-dependent conversion of 7-carboxy-7-deazaguanine (CDG) to 7-cyano-7-deazaguanine (preQ(0)). The sequence is that of 7-cyano-7-deazaguanine synthase from Escherichia coli (strain ATCC 8739 / DSM 1576 / NBRC 3972 / NCIMB 8545 / WDCM 00012 / Crooks).